A 146-amino-acid polypeptide reads, in one-letter code: uncharacterized protein (146 aa).

The region spanning 31–119 (EKVMIVEGKS…RAYKEVAAAP (89 aa)) is the Toprim domain.

This is an uncharacterized protein from Bacillus subtilis (strain 168).